Here is a 317-residue protein sequence, read N- to C-terminus: Beta-ketoacyl-[acyl-carrier-protein] synthase III (317 aa).

Active-site residues include cysteine 112 and histidine 244. An ACP-binding region spans residues 245 to 249 (QANIR). The active site involves asparagine 274.

Belongs to the thiolase-like superfamily. FabH family. In terms of assembly, homodimer.

It localises to the cytoplasm. The enzyme catalyses malonyl-[ACP] + acetyl-CoA + H(+) = 3-oxobutanoyl-[ACP] + CO2 + CoA. The protein operates within lipid metabolism; fatty acid biosynthesis. Its function is as follows. Catalyzes the condensation reaction of fatty acid synthesis by the addition to an acyl acceptor of two carbons from malonyl-ACP. Catalyzes the first condensation reaction which initiates fatty acid synthesis and may therefore play a role in governing the total rate of fatty acid production. Possesses both acetoacetyl-ACP synthase and acetyl transacylase activities. Its substrate specificity determines the biosynthesis of branched-chain and/or straight-chain of fatty acids. The polypeptide is Beta-ketoacyl-[acyl-carrier-protein] synthase III (Rickettsia typhi (strain ATCC VR-144 / Wilmington)).